A 644-amino-acid polypeptide reads, in one-letter code: Protein cueball (644 aa).

An N-terminal signal peptide occupies residues 1 to 26 (MIRIRFGMDVLLVVLLATCLLTPAHG). The Extracellular portion of the chain corresponds to 27 to 531 (TPLEWDFAVT…VCLTPRVWTS (505 aa)). N-linked (GlcNAc...) asparagine glycans are attached at residues Asn82 and Asn108. LDL-receptor class B repeat units lie at residues 121–166 (MNLF…DVCR), 167–211 (RKLY…DQLS), and 212–257 (DRLF…TNDA). N-linked (GlcNAc...) asparagine glycosylation is found at Asn175 and Asn190. A glycan (N-linked (GlcNAc...) asparagine) is linked at Asn313. EGF-like domains are found at residues 398-430 (EIRE…FTGE) and 433-471 (ELSV…ARCE). 5 cysteine pairs are disulfide-bonded: Cys402-Cys411, Cys406-Cys421, Cys437-Cys447, Cys441-Cys459, and Cys461-Cys470. Residues Asn473 and Asn508 are each glycosylated (N-linked (GlcNAc...) asparagine). Residues 532 to 552 (SVIIILVVGIVSSLLLVAVIV) form a helical membrane-spanning segment. The Cytoplasmic portion of the chain corresponds to 553–644 (HGIRRLYKPK…LIHNMEDDLY (92 aa)).

Belongs to the cueball family.

It is found in the cell membrane. Has a role in spermatogenesis and oogenesis. This chain is Protein cueball, found in Drosophila simulans (Fruit fly).